The following is a 159-amino-acid chain: Succinate dehydrogenase assembly factor 2, mitochondrial (159 aa).

A mitochondrion-targeting transit peptide spans methionine 1 to glycine 14.

It belongs to the SDHAF2 family. In terms of assembly, interacts with the flavoprotein subunit within the SDH catalytic dimer.

The protein localises to the mitochondrion matrix. Functionally, plays an essential role in the assembly of succinate dehydrogenase (SDH), an enzyme complex (also referred to as respiratory complex II) that is a component of both the tricarboxylic acid (TCA) cycle and the mitochondrial electron transport chain, and which couples the oxidation of succinate to fumarate with the reduction of ubiquinone (coenzyme Q) to ubiquinol. Required for flavinylation (covalent attachment of FAD) of the flavoprotein subunit of the SDH catalytic dimer. This Culex quinquefasciatus (Southern house mosquito) protein is Succinate dehydrogenase assembly factor 2, mitochondrial.